A 625-amino-acid chain; its full sequence is ATP-dependent RNA helicase mrh4, mitochondrial (625 aa).

Residues 1–16 (MWKTARDSVCLICRSA) constitute a mitochondrion transit peptide. A compositionally biased stretch (low complexity) spans 19–28 (TTTSTSARAS). The disordered stretch occupies residues 19–119 (TTTSTSARAS…DKNTKGQKAL (101 aa)). A compositionally biased stretch (basic and acidic residues) spans 90–113 (DPRKAPKPKPVEEDSRRDKRDKNT). Positions 144-177 (QAFDQFDLLPVVKEAIAQEALKGMTEIKPTPVQR) match the Q motif motif. One can recognise a Helicase ATP-binding domain in the interval 195–406 (PKSDNGREEF…EEQFPYINRI (212 aa)). Residue 208-215 (AETGSGKT) coordinates ATP. Positions 353–356 (DEAD) match the DEAD box motif. The 173-residue stretch at 453–625 (EGPKSEIDVK…ESMFMGQALV (173 aa)) folds into the Helicase C-terminal domain.

The protein belongs to the DEAD box helicase family. MRH4 subfamily.

It is found in the mitochondrion. It carries out the reaction ATP + H2O = ADP + phosphate + H(+). In terms of biological role, ATP-binding RNA helicase involved in mitochondrial RNA metabolism. Required for maintenance of mitochondrial DNA. The chain is ATP-dependent RNA helicase mrh4, mitochondrial (drh-15) from Neurospora crassa (strain ATCC 24698 / 74-OR23-1A / CBS 708.71 / DSM 1257 / FGSC 987).